A 416-amino-acid polypeptide reads, in one-letter code: Probable F-box protein At5g47300 (416 aa).

One can recognise an F-box domain in the interval T40–H86.

The sequence is that of Probable F-box protein At5g47300 from Arabidopsis thaliana (Mouse-ear cress).